A 979-amino-acid polypeptide reads, in one-letter code: Translation initiation factor IF-2 (979 aa).

The tract at residues 68–386 (VKQKQGTPAS…DKRDAASRAA (319 aa)) is disordered. Basic and acidic residues-rich tracts occupy residues 102-179 (QDMR…KPEE), 217-229 (EMEKKEDTEEVFR), and 260-273 (TKEDRQREQNDADG). Polar residues predominate over residues 317–326 (RPAQQQSNAS). A compositionally biased stretch (basic and acidic residues) spans 347 to 356 (DVQRQVKETL). Residues 478–646 (ARPPIVTVMG…KVLLEADILE (169 aa)) form the tr-type G domain. The G1 stretch occupies residues 487-494 (GHVDHGKT). 487-494 (GHVDHGKT) serves as a coordination point for GTP. The segment at 512 to 516 (GITQH) is G2. The interval 534 to 537 (DTPG) is G3. GTP contacts are provided by residues 534-538 (DTPGH) and 588-591 (NKID). Positions 588–591 (NKID) are G4. The interval 624–626 (SAK) is G5.

This sequence belongs to the TRAFAC class translation factor GTPase superfamily. Classic translation factor GTPase family. IF-2 subfamily.

It localises to the cytoplasm. In terms of biological role, one of the essential components for the initiation of protein synthesis. Protects formylmethionyl-tRNA from spontaneous hydrolysis and promotes its binding to the 30S ribosomal subunits. Also involved in the hydrolysis of GTP during the formation of the 70S ribosomal complex. This Porphyromonas gingivalis (strain ATCC BAA-308 / W83) protein is Translation initiation factor IF-2.